Reading from the N-terminus, the 226-residue chain is Ribosome maturation factor RimP (226 aa).

Positions valine 190–aspartate 226 are disordered. Residues glycine 204–alanine 215 show a composition bias toward basic residues.

This sequence belongs to the RimP family.

Its subcellular location is the cytoplasm. Its function is as follows. Required for maturation of 30S ribosomal subunits. The sequence is that of Ribosome maturation factor RimP from Nitratidesulfovibrio vulgaris (strain DSM 19637 / Miyazaki F) (Desulfovibrio vulgaris).